The sequence spans 364 residues: Alanine racemase (364 aa).

Lys-34 (proton acceptor; specific for D-alanine) is an active-site residue. The residue at position 34 (Lys-34) is an N6-(pyridoxal phosphate)lysine. Substrate is bound at residue Arg-129. The active-site Proton acceptor; specific for L-alanine is the Tyr-259. Met-307 is a substrate binding site.

This sequence belongs to the alanine racemase family. The cofactor is pyridoxal 5'-phosphate.

It catalyses the reaction L-alanine = D-alanine. It participates in amino-acid biosynthesis; D-alanine biosynthesis; D-alanine from L-alanine: step 1/1. In terms of biological role, catalyzes the interconversion of L-alanine and D-alanine. May also act on other amino acids. This chain is Alanine racemase (alr), found in Coxiella burnetii (strain Dugway 5J108-111).